A 274-amino-acid chain; its full sequence is tRNA pseudouridine synthase A (274 aa).

Asp-54 functions as the Nucleophile in the catalytic mechanism. Tyr-112 is a substrate binding site.

It belongs to the tRNA pseudouridine synthase TruA family. Homodimer.

It catalyses the reaction uridine(38/39/40) in tRNA = pseudouridine(38/39/40) in tRNA. Formation of pseudouridine at positions 38, 39 and 40 in the anticodon stem and loop of transfer RNAs. The polypeptide is tRNA pseudouridine synthase A (Solidesulfovibrio magneticus (strain ATCC 700980 / DSM 13731 / RS-1) (Desulfovibrio magneticus)).